Consider the following 318-residue polypeptide: Methionyl-tRNA formyltransferase (318 aa).

Residue 120-123 (SLLP) participates in (6S)-5,6,7,8-tetrahydrofolate binding.

Belongs to the Fmt family.

The catalysed reaction is L-methionyl-tRNA(fMet) + (6R)-10-formyltetrahydrofolate = N-formyl-L-methionyl-tRNA(fMet) + (6S)-5,6,7,8-tetrahydrofolate + H(+). Its function is as follows. Attaches a formyl group to the free amino group of methionyl-tRNA(fMet). The formyl group appears to play a dual role in the initiator identity of N-formylmethionyl-tRNA by promoting its recognition by IF2 and preventing the misappropriation of this tRNA by the elongation apparatus. The protein is Methionyl-tRNA formyltransferase of Variovorax paradoxus (strain S110).